Reading from the N-terminus, the 292-residue chain is Cytochrome c1, heme protein, mitochondrial (292 aa).

The transit peptide at 1 to 46 (MFRSFSTAAKQAVKGTYVQRAIVGGAAVVGIGASTMLYADSLTADA) directs the protein to the mitochondrion. The Mitochondrial intermembrane portion of the chain corresponds to 47–253 (MTAAEHGLHA…SEPEHDERKR (207 aa)). Positions 73 to 226 (SSIRRGYQVY…DLVEYEDGTP (154 aa)) constitute a Cytochrome c domain. Cysteine 86, cysteine 89, and histidine 90 together coordinate heme c. The interval 117 to 137 (FEYDDEPDDQGNPKKRPGKLA) is disordered. Methionine 210 provides a ligand contact to heme c. Residues 254–272 (LGLKAMIVLSSLYLLSVWV) traverse the membrane as a helical segment. Residues 273–292 (KKFKWASIKSRKIVFNPPKK) lie on the Mitochondrial matrix side of the membrane.

Belongs to the cytochrome c family. Component of the ubiquinol-cytochrome c oxidoreductase (cytochrome b-c1 complex, complex III, CIII), a multisubunit enzyme composed of 3 respiratory subunits cytochrome b, cytochrome c1 and Rieske protein, 2 core protein subunits, and additional low-molecular weight protein subunits. The complex exists as an obligatory dimer and forms supercomplexes (SCs) in the inner mitochondrial membrane with cytochrome c oxidase (complex IV, CIV). The cofactor is heme c.

It is found in the mitochondrion inner membrane. The catalysed reaction is a quinol + 2 Fe(III)-[cytochrome c](out) = a quinone + 2 Fe(II)-[cytochrome c](out) + 2 H(+)(out). Functionally, component of the ubiquinol-cytochrome c oxidoreductase, a multisubunit transmembrane complex that is part of the mitochondrial electron transport chain which drives oxidative phosphorylation. The respiratory chain contains 3 multisubunit complexes succinate dehydrogenase (complex II, CII), ubiquinol-cytochrome c oxidoreductase (cytochrome b-c1 complex, complex III, CIII) and cytochrome c oxidase (complex IV, CIV), that cooperate to transfer electrons derived from NADH and succinate to molecular oxygen, creating an electrochemical gradient over the inner membrane that drives transmembrane transport and the ATP synthase. The cytochrome b-c1 complex catalyzes electron transfer from ubiquinol to cytochrome c, linking this redox reaction to translocation of protons across the mitochondrial inner membrane, with protons being carried across the membrane as hydrogens on the quinol. In the process called Q cycle, 2 protons are consumed from the matrix, 4 protons are released into the intermembrane space and 2 electrons are passed to cytochrome c. Cytochrome c1 is a catalytic core subunit containing a c-type heme. It transfers electrons from the [2Fe-2S] iron-sulfur cluster of the Rieske protein to cytochrome c. This chain is Cytochrome c1, heme protein, mitochondrial (CYT1), found in Kluyveromyces lactis (strain ATCC 8585 / CBS 2359 / DSM 70799 / NBRC 1267 / NRRL Y-1140 / WM37) (Yeast).